Consider the following 277-residue polypeptide: Zinc finger protein 511 (277 aa).

C2H2-type zinc fingers lie at residues 96-121 (FRCHIAGCKQLFDTLEGYEHHYNALH), 123-146 (NVCSNCKRSFPSNRLLEIHILEWH), and 160-185 (YECLVEGCGLKFKTSKERKDHLIRTH). The disordered stretch occupies residues 225–244 (ESSESMDFSLTPEPVETEPM).

This sequence belongs to the krueppel C2H2-type zinc-finger protein family.

It is found in the nucleus. Its function is as follows. May be involved in transcriptional regulation. The polypeptide is Zinc finger protein 511 (znf511) (Danio rerio (Zebrafish)).